The chain runs to 493 residues: Sulfoacetaldehyde dehydrogenase (acylating) (493 aa).

Positions Met-1–Gln-10 are enriched in basic residues. The tract at residues Met-1 to Ala-21 is disordered. Residue Cys-273 is the Nucleophile of the active site.

It belongs to the aldehyde dehydrogenase family. Homodimer.

The protein resides in the cytoplasm. The enzyme catalyses sulfoacetaldehyde + NADP(+) + CoA = sulfoacetyl-CoA + NADPH + H(+). In terms of biological role, involved in the degradation of sulfoacetate, a widespread natural product. Catalyzes the conversion of sulfoacetyl-CoA and NADPH to sulfoacetaldehyde, CoA and NADP(+). Specific for NADP(+) and sulfoacetaldehyde. The sequence is that of Sulfoacetaldehyde dehydrogenase (acylating) from Cupriavidus necator (strain ATCC 17699 / DSM 428 / KCTC 22496 / NCIMB 10442 / H16 / Stanier 337) (Ralstonia eutropha).